The primary structure comprises 271 residues: uncharacterized protein (271 aa).

The tract at residues 233–261 is disordered; sequence VEPDPNRFSEPVDQPTLVEEGKEARRTER. Basic and acidic residues predominate over residues 251–261; that stretch reads EEGKEARRTER.

Functionally, may be involved in swimming motility. This is an uncharacterized protein from Haloferax volcanii (strain ATCC 29605 / DSM 3757 / JCM 8879 / NBRC 14742 / NCIMB 2012 / VKM B-1768 / DS2) (Halobacterium volcanii).